The sequence spans 195 residues: Oocyte-secreted protein 3 (195 aa).

An N-terminal signal peptide occupies residues M1–G21. N-linked (GlcNAc...) asparagine glycosylation occurs at N102.

This sequence belongs to the PLAC1 family. Oocyte-specific.

It localises to the secreted. The chain is Oocyte-secreted protein 3 from Mus musculus (Mouse).